Reading from the N-terminus, the 296-residue chain is Urease accessory protein UreD (296 aa).

The protein belongs to the UreD family. As to quaternary structure, ureD, UreF and UreG form a complex that acts as a GTP-hydrolysis-dependent molecular chaperone, activating the urease apoprotein by helping to assemble the nickel containing metallocenter of UreC. The UreE protein probably delivers the nickel.

The protein resides in the cytoplasm. Required for maturation of urease via the functional incorporation of the urease nickel metallocenter. This is Urease accessory protein UreD from Janthinobacterium sp. (strain Marseille) (Minibacterium massiliensis).